Reading from the N-terminus, the 103-residue chain is Growth-regulated alpha protein (103 aa).

The signal sequence occupies residues 1 to 30; the sequence is MARAANPAPRLLGAAMLLLLLVAAGRRAAG. 2 cysteine pairs are disulfide-bonded: Cys39-Cys65 and Cys41-Cys81.

It belongs to the intercrine alpha (chemokine CxC) family.

It is found in the secreted. Functionally, has chemotactic activity for neutrophils. The sequence is that of Growth-regulated alpha protein (CXCL1) from Ovis aries (Sheep).